We begin with the raw amino-acid sequence, 466 residues long: MKSTVEQLSPTRVRINVEVPFAELEPDFQRAYKELAKQVRLPGFRPGKAPAKLLEARIGREAMLDQIVNDALPSRYGQAVAESDVQPLGRPNIEVTKKEYGQDLQFTAEVDIRPKISLPDLSALTVSVDPIEIGEDDVDAELQSLRTRFGTLTAVDRPVAVGDVVSIDLSATVDGEDIPNAAAEGLSHEVGSGRLIAGLDDAVVGLSADESRVFTAKLAAGEHAGQEAQVTVTVRSVKERELPEPDDEFAQLASEFDSIDELRASLSDQVRQAKRAQQAEQIRNATIDALLEQVDVPLPESYVQAQFDSVLHSALSGLNHDEARFNELLVEQGSSRAAFDAEARTASEKDVKRQLLLDALADELQVQVGQDDLTERLVTTSRQYGIEPQQLFGYLQERNQLPTMFADVRRELAIRAAVEAATVTDSDGNTIDTSEFFGKRVSAGEAEEAEPADEGAARAASDEATT.

The PPIase FKBP-type domain occupies 162–243; sequence GDVVSIDLSA…VRSVKERELP (82 aa). Residues 428-466 are disordered; it reads GNTIDTSEFFGKRVSAGEAEEAEPADEGAARAASDEATT. Residues 457 to 466 show a composition bias toward low complexity; it reads ARAASDEATT.

This sequence belongs to the FKBP-type PPIase family. Tig subfamily.

Its subcellular location is the cytoplasm. The enzyme catalyses [protein]-peptidylproline (omega=180) = [protein]-peptidylproline (omega=0). Functionally, involved in protein export. Acts as a chaperone by maintaining the newly synthesized protein in an open conformation. Functions as a peptidyl-prolyl cis-trans isomerase. The polypeptide is Trigger factor (Mycobacterium bovis (strain BCG / Tokyo 172 / ATCC 35737 / TMC 1019)).